The primary structure comprises 1034 residues: Presequence protease, mitochondrial (1034 aa).

The N-terminal 26 residues, 1–26, are a transit peptide targeting the mitochondrion; that stretch reads MLKTRLKQSRAISRVVRRYACSHPIS. His-97 provides a ligand contact to Zn(2+). The active-site Proton acceptor is Glu-100. Position 101 (His-101) interacts with Zn(2+). Glu-173 is a catalytic residue. Glu-198 contacts Zn(2+).

It belongs to the peptidase M16 family. PreP subfamily. As to quaternary structure, monomer and homodimer; homodimerization is induced by binding of the substrate. Zn(2+) is required as a cofactor.

The protein localises to the mitochondrion intermembrane space. It is found in the mitochondrion matrix. Degrades mitochondrial transit peptides after their cleavage in the intermembrane space or in the matrix, and presequence peptides; clearance of these peptides is required to keep the presequence processing machinery running. Preferentially cleaves the N-terminal side of paired basic amino acid residues. Also degrades other unstructured peptides. May function as an ATP-dependent peptidase as opposed to a metalloendopeptidase. The sequence is that of Presequence protease, mitochondrial (CYM1) from Candida albicans (strain SC5314 / ATCC MYA-2876) (Yeast).